Reading from the N-terminus, the 268-residue chain is Tryptophan synthase alpha chain (268 aa).

Catalysis depends on proton acceptor residues Glu-49 and Asp-60.

The protein belongs to the TrpA family. Tetramer of two alpha and two beta chains.

The enzyme catalyses (1S,2R)-1-C-(indol-3-yl)glycerol 3-phosphate + L-serine = D-glyceraldehyde 3-phosphate + L-tryptophan + H2O. The protein operates within amino-acid biosynthesis; L-tryptophan biosynthesis; L-tryptophan from chorismate: step 5/5. The alpha subunit is responsible for the aldol cleavage of indoleglycerol phosphate to indole and glyceraldehyde 3-phosphate. This is Tryptophan synthase alpha chain from Shigella dysenteriae serotype 1 (strain Sd197).